Consider the following 320-residue polypeptide: Ribose-phosphate pyrophosphokinase 1 (320 aa).

ATP-binding positions include 39–41 (DGE) and 98–99 (RQ). 2 residues coordinate Mg(2+): histidine 132 and aspartate 173. Lysine 196 is a catalytic residue. Residues arginine 198, aspartate 224, and 228–232 (DTAGT) contribute to the D-ribose 5-phosphate site.

The protein belongs to the ribose-phosphate pyrophosphokinase family. Class I subfamily. Homohexamer. Mg(2+) serves as cofactor.

The protein resides in the cytoplasm. It carries out the reaction D-ribose 5-phosphate + ATP = 5-phospho-alpha-D-ribose 1-diphosphate + AMP + H(+). Its pathway is metabolic intermediate biosynthesis; 5-phospho-alpha-D-ribose 1-diphosphate biosynthesis; 5-phospho-alpha-D-ribose 1-diphosphate from D-ribose 5-phosphate (route I): step 1/1. In terms of biological role, involved in the biosynthesis of the central metabolite phospho-alpha-D-ribosyl-1-pyrophosphate (PRPP) via the transfer of pyrophosphoryl group from ATP to 1-hydroxyl of ribose-5-phosphate (Rib-5-P). This Streptococcus pyogenes serotype M1 protein is Ribose-phosphate pyrophosphokinase 1.